We begin with the raw amino-acid sequence, 206 residues long: Threonine efflux protein (206 aa).

A helical membrane pass occupies residues Met1 to Pro21. The Periplasmic portion of the chain corresponds to Asp22 to Leu43. The chain crosses the membrane as a helical span at residues Gly44–Ile64. Topologically, residues Glu65–Lys66 are cytoplasmic. Residues Met67–Tyr87 form a helical membrane-spanning segment. Residues Gln88 to Arg149 lie on the Periplasmic side of the membrane. Residues Trp150–Leu173 traverse the membrane as a helical segment. At Pro174 to Arg206 the chain is on the cytoplasmic side.

The protein belongs to the Rht family.

It localises to the cell inner membrane. Functionally, conducts the efflux of threonine. This Salmonella typhimurium (strain LT2 / SGSC1412 / ATCC 700720) protein is Threonine efflux protein (rhtC).